The primary structure comprises 420 residues: ATP-dependent Clp protease ATP-binding subunit ClpX (420 aa).

The region spanning 3–57 (KKTPGTNGKQKLFCSFCGKEQDAVKRLVAGPGVYICDECISLCNEIIAEDHEHSH) is the ClpX-type ZB domain. Cys16, Cys19, Cys38, and Cys41 together coordinate Zn(2+). 122–129 (PTGSGKTL) serves as a coordination point for ATP.

It belongs to the ClpX chaperone family. In terms of assembly, component of the ClpX-ClpP complex. Forms a hexameric ring that, in the presence of ATP, binds to fourteen ClpP subunits assembled into a disk-like structure with a central cavity, resembling the structure of eukaryotic proteasomes.

In terms of biological role, ATP-dependent specificity component of the Clp protease. It directs the protease to specific substrates. Can perform chaperone functions in the absence of ClpP. This is ATP-dependent Clp protease ATP-binding subunit ClpX from Leptospira borgpetersenii serovar Hardjo-bovis (strain L550).